The chain runs to 457 residues: Transcription factor CP2-like protein 1 (457 aa).

Positions 1 to 52 are mediate transcriptional repression; that stretch reads MLFWHTQPEHYNQHNSGSYLRDVLALPIFKQEEPQLSPENEARLPPLQYVLC. One can recognise a Grh/CP2 DB domain in the interval 43-280; sequence RLPPLQYVLC…PSPSYNGSPN (238 aa). 2 disordered regions span residues 219–245 and 271–301; these read KPKG…KEKY and PSPS…LPVG. Residues 221–245 are compositionally biased toward basic and acidic residues; sequence KGADRKQETDREKMEKRTAQEKEKY. Positions 261–365 are SAM2-like domain; sequence PDVAYQVNSA…IRLFNAIKGR (105 aa). Residues 271-281 show a composition bias toward polar residues; that stretch reads PSPSYNGSPNS.

It belongs to the grh/CP2 family. CP2 subfamily. As to quaternary structure, forms homohexamers via its SAM-like domain. Interacts with MTA1; which is indispensable for TFCP2L1-mediated self-renewal-promoting effect and endoderm-inhibiting action.

It localises to the nucleus. Transcription factor that facilitates establishment and maintenance of pluripotency in embryonic stem cells (ESCs). With KLF2, acts as the major effector of self-renewal that mediates induction of pluripotency downstream of LIF/STAT3 and Wnt/beta-catenin signaling. Required for normal duct development in the salivary gland and kidney. Coordinates the development of the kidney collecting ducts intercalated (IC) and principal (PC) cells, which regulate acid-base and salt-water homeostasis, respectively. Regulates the expression of IC genes including subunits B1 and D2 of the V-ATPase complex, OXGR1, CA12, SLC4A1, AQP6 and IC-specific transcription factor FOXI1. Also regulates the expression of JAG1 and subsequent notch signaling in the collecting duct. JAG1 initiates notch signaling in PCs but inhibits notch signaling in ICs. Acts as a transcriptional suppressor that may suppress UBP1-mediated transcriptional activation. Modulates the placental expression of CYP11A1. This chain is Transcription factor CP2-like protein 1 (TFCP2L1), found in Pongo abelii (Sumatran orangutan).